The following is a 1013-amino-acid chain: MGLQALSPRMLLWLVVSGIVFSRVLWVCAGLDYDYTFDGNEEDKTEPIDYKDPCKAAVFWGDIALDDEDLNIFQIDRTIDLTQSPFGKLGHITGGFGDHGMPKKRGALYQLIERIRRIGSGLEQNNTMKGKAPPKLSEQSEKNRVPRAATSRTERIWPGGVIPYVIGGNFTGSQRAMFKQAMRHWEKHTCVTFTERSDEESYIVFTYRPCGCCSYVGRRGNGPQAISIGKNCDKFGIVVHELGHVIGFWHEHTRPDRDNHVTIIRENIQPGQEYNFLKMEPGEVNSLGERYDFDSIMHYARNTFSRGMFLDTILPSRDDNGIRPAIGQRTRLSKGDIAQARKLYRCPACGETLQESSGNLSSPGFPNGYPSYTHCIWRVSVTPGEKIVLNFTTMDLYKSSLCWYDYIEVRDGYWRKSPLLGRFCGDKVAGVLTSTDSRMWIEFRSSSNWVGKGFAAVYEAICGGEIRKNEGQIQSPNYPDDYRPMKECVWKIMVSEGYHVGLTFQAFEIERHDSCAYDHLEVRDGASENSPLIGRFCGYDKPEDIRSTSNTLWMKFVSDGTVNKAGFAANFFKEEDECAKPDRGGCEQRCLNTLGSYQCACEPGYELGPDRRSCEAACGGLLTKLNGTITTPGWPKEYPPNKNCVWQVIAPSQYRISVKFEFFELEGNEVCKYDYVEIWSGPSSESKLHGKFCGADIPEVMTSHFNNMRIEFKSDNTVSKKGFKAHFFSDKDECSKDNGGCQHECVNTMGSYTCQCRNGFVLHENKHDCKEAECEQKIHSPSGLITSPNWPDKYPSRKECTWVISAIPGHRITLAFNEFEVEQHQECAYDHLEIFDGETEKSPILGRLCGSKIPDPLMATGNEMFIRFISDASVQRKGFQATHSTECGGRLKAESKPRDLYSHAQFGDNNYPGQLDCEWLLVSERGSRLELSFQTFEVEEEADCGYDYVEVFDGLSSKAVGLGRFCGSGPPEEIYSIGDVALIHFHTDDTINKKGFYIRYKSIRYPETMHAKN.

An N-terminal signal peptide occupies residues 1–30 (MGLQALSPRMLLWLVVSGIVFSRVLWVCAG). A propeptide spanning residues 31-147 (LDYDYTFDGN…EQSEKNRVPR (117 aa)) is cleaved from the precursor. Positions 124-150 (QNNTMKGKAPPKLSEQSEKNRVPRAAT) are disordered. The 200-residue stretch at 148-347 (AATSRTERIW…AQARKLYRCP (200 aa)) folds into the Peptidase M12A domain. A glycan (N-linked (GlcNAc...) asparagine) is linked at Asn-169. Cystine bridges form between Cys-190-Cys-346, Cys-210-Cys-232, Cys-212-Cys-213, and Cys-349-Cys-375. His-240 is a Zn(2+) binding site. The active site involves Glu-241. Zn(2+)-binding residues include His-244 and His-250. CUB domains follow at residues 349 to 461 (CGET…YEAI) and 462 to 574 (CGGE…FFKE). 2 N-linked (GlcNAc...) asparagine glycosylation sites follow: Asn-359 and Asn-390. Disulfide bonds link Cys-402-Cys-424, Cys-462-Cys-488, Cys-515-Cys-537, Cys-578-Cys-590, Cys-586-Cys-599, Cys-601-Cys-614, Cys-618-Cys-644, Cys-671-Cys-693, Cys-734-Cys-745, Cys-741-Cys-754, Cys-756-Cys-769, Cys-774-Cys-800, Cys-827-Cys-849, Cys-887-Cys-917, and Cys-944-Cys-966. The EGF-like 1; calcium-binding domain maps to 574-615 (EEDECAKPDRGGCEQRCLNTLGSYQCACEPGYELGPDRRSCE). Residues 618–730 (CGGLLTKLNG…KGFKAHFFSD (113 aa)) form the CUB 3 domain. The N-linked (GlcNAc...) asparagine glycan is linked to Asn-626. In terms of domain architecture, EGF-like 2; calcium-binding spans 730 to 770 (DKDECSKDNGGCQHECVNTMGSYTCQCRNGFVLHENKHDCK). 2 CUB domains span residues 774-886 (CEQK…HSTE) and 887-1003 (CGGR…YKSI).

Zn(2+) serves as cofactor. As to expression, highly expressed in brain and kidney and weakly in lung, skeletal muscle. A perceptible level of expression is observed in heart and testis.

The protein resides in the secreted. Its function is as follows. Protease which processes procollagen C-propeptides, such as chordin, pro-biglycan and pro-lysyl oxidase. Required for the embryonic development, especially heart development. Predominant protease, which in the development, influences dorsal-ventral patterning and skeletogenesis. This chain is Tolloid-like protein 1 (Tll1), found in Mus musculus (Mouse).